The chain runs to 27 residues: Dermaseptin-S4 (27 aa).

This sequence belongs to the frog skin active peptide (FSAP) family. Dermaseptin subfamily. Monomer and oligomer. Forms aggregates in aqueous environments. Expressed by the skin glands.

Its subcellular location is the secreted. Potent antimicrobial peptide with activity against bacteria and protozoa. Also has activity against fungi. Also shows activity against enveloped herpes simplex virus type 1. Probably acts by disturbing membrane functions with its amphipathic structure. Binds to healthy erythrocytes (this binding is receptor independent), and has strong hemolytic activity. Does not bind to P.falciparum infected erythrocytes, but accumulates within the parasite. Kills the parasite, and only at high concentrations has a hemolytic activity on the host cell. In vitro, shows high spermicidal activities. In Phyllomedusa sauvagei (Sauvage's leaf frog), this protein is Dermaseptin-S4.